Reading from the N-terminus, the 354-residue chain is UDP-N-acetylglucosamine--N-acetylmuramyl-(pentapeptide) pyrophosphoryl-undecaprenol N-acetylglucosamine transferase (354 aa).

UDP-N-acetyl-alpha-D-glucosamine contacts are provided by residues 11 to 13, R164, S194, and Q289; that span reads TAG.

This sequence belongs to the glycosyltransferase 28 family. MurG subfamily.

The protein localises to the cell membrane. It carries out the reaction di-trans,octa-cis-undecaprenyl diphospho-N-acetyl-alpha-D-muramoyl-L-alanyl-D-glutamyl-meso-2,6-diaminopimeloyl-D-alanyl-D-alanine + UDP-N-acetyl-alpha-D-glucosamine = di-trans,octa-cis-undecaprenyl diphospho-[N-acetyl-alpha-D-glucosaminyl-(1-&gt;4)]-N-acetyl-alpha-D-muramoyl-L-alanyl-D-glutamyl-meso-2,6-diaminopimeloyl-D-alanyl-D-alanine + UDP + H(+). The protein operates within cell wall biogenesis; peptidoglycan biosynthesis. Cell wall formation. Catalyzes the transfer of a GlcNAc subunit on undecaprenyl-pyrophosphoryl-MurNAc-pentapeptide (lipid intermediate I) to form undecaprenyl-pyrophosphoryl-MurNAc-(pentapeptide)GlcNAc (lipid intermediate II). In Clostridium botulinum (strain 657 / Type Ba4), this protein is UDP-N-acetylglucosamine--N-acetylmuramyl-(pentapeptide) pyrophosphoryl-undecaprenol N-acetylglucosamine transferase.